Here is a 97-residue protein sequence, read N- to C-terminus: Co-chaperonin GroES (97 aa).

It belongs to the GroES chaperonin family. Heptamer of 7 subunits arranged in a ring. Interacts with the chaperonin GroEL.

Its subcellular location is the cytoplasm. Together with the chaperonin GroEL, plays an essential role in assisting protein folding. The GroEL-GroES system forms a nano-cage that allows encapsulation of the non-native substrate proteins and provides a physical environment optimized to promote and accelerate protein folding. GroES binds to the apical surface of the GroEL ring, thereby capping the opening of the GroEL channel. This Buchnera aphidicola subsp. Thelaxes suberi protein is Co-chaperonin GroES.